The primary structure comprises 99 residues: Plastocyanin (99 aa).

The Plastocyanin-like domain occupies 1–99; the sequence is LDVLLGSDDG…AGMVGKVTVN (99 aa). The Cu cation site is built by His37, Cys84, His87, and Met92.

The protein belongs to the plastocyanin family. Cu(2+) serves as cofactor.

The protein resides in the plastid. Its subcellular location is the chloroplast thylakoid membrane. Its function is as follows. Participates in electron transfer between P700 and the cytochrome b6-f complex in photosystem I. The sequence is that of Plastocyanin (PETE) from Mercurialis perennis (Dog's mercury).